The primary structure comprises 105 residues: Heat shock protein HspQ (105 aa).

The disordered stretch occupies residues 84–105; that stretch reads QPKLDELSASIKKQLKTPRLRN. The segment covering 96 to 105 has biased composition (basic residues); the sequence is KQLKTPRLRN.

Belongs to the HspQ family.

The protein localises to the cytoplasm. Functionally, involved in the degradation of certain denaturated proteins, including DnaA, during heat shock stress. This is Heat shock protein HspQ from Wigglesworthia glossinidia brevipalpis.